Reading from the N-terminus, the 213-residue chain is Protein DMP3 (213 aa).

The disordered stretch occupies residues 1-27 (MSSPSSLTQRNPTSSQEQSESVPQLRR). The next 4 helical transmembrane spans lie at 45–65 (LANL…PVFT), 74–94 (TQVL…LSSF), 136–156 (IRII…AVAL), and 176–196 (VLDI…LVFP).

The protein belongs to the plant DMP1 protein family. In terms of tissue distribution, expressed in leaves, siliques and roots (e.g. root hairs).

It is found in the endoplasmic reticulum membrane. Its function is as follows. Involved in membrane remodeling. This Arabidopsis thaliana (Mouse-ear cress) protein is Protein DMP3.